Consider the following 352-residue polypeptide: Galactokinase (352 aa).

A substrate-binding site is contributed by 17–20 (EHTD). ATP is bound by residues Ser-49 and 101-107 (GAGLSSS). Residues Ser-107 and Glu-139 each contribute to the Mg(2+) site. Asp-151 serves as the catalytic Proton acceptor. A substrate-binding site is contributed by Tyr-200.

Belongs to the GHMP kinase family. GalK subfamily. As to quaternary structure, monomer.

It is found in the cytoplasm. It carries out the reaction alpha-D-galactose + ATP = alpha-D-galactose 1-phosphate + ADP + H(+). The protein operates within carbohydrate metabolism; galactose metabolism. Functionally, catalyzes the transfer of the gamma-phosphate of ATP to D-galactose to form alpha-D-galactose-1-phosphate (Gal-1-P). Is very specific for its substrate, since it is not able to use D-glucose, D-fructose, D-mannose, 2-deoxy-D-glucose, and D-glucosamine as substrates. This Pyrococcus furiosus (strain ATCC 43587 / DSM 3638 / JCM 8422 / Vc1) protein is Galactokinase.